Here is a 157-residue protein sequence, read N- to C-terminus: uncharacterized protein (157 aa).

It to E.coli YcjD and H.influenzae HI_0925.

This is an uncharacterized protein from Haemophilus influenzae (strain ATCC 51907 / DSM 11121 / KW20 / Rd).